A 346-amino-acid polypeptide reads, in one-letter code: Methylthioribose-1-phosphate isomerase (346 aa).

Substrate-binding positions include 48–50 (RGA), R91, and Q200. Catalysis depends on D241, which acts as the Proton donor. Residue 251-252 (NK) participates in substrate binding.

It belongs to the eIF-2B alpha/beta/delta subunits family. MtnA subfamily.

It catalyses the reaction 5-(methylsulfanyl)-alpha-D-ribose 1-phosphate = 5-(methylsulfanyl)-D-ribulose 1-phosphate. It participates in amino-acid biosynthesis; L-methionine biosynthesis via salvage pathway; L-methionine from S-methyl-5-thio-alpha-D-ribose 1-phosphate: step 1/6. Catalyzes the interconversion of methylthioribose-1-phosphate (MTR-1-P) into methylthioribulose-1-phosphate (MTRu-1-P). The protein is Methylthioribose-1-phosphate isomerase of Picosynechococcus sp. (strain ATCC 27264 / PCC 7002 / PR-6) (Agmenellum quadruplicatum).